Reading from the N-terminus, the 668-residue chain is Kelch repeat-containing protein ARB_01230 (668 aa).

Residues 1–32 form the signal peptide; that stretch reads MEVGRFASKSASMTYLLLVLLVGFILPQQGQH. Topologically, residues 33 to 522 are extracellular; it reads AHARTLARRD…GSGSDGPNIA (490 aa). N60 carries an N-linked (GlcNAc...) asparagine glycan. Kelch repeat units follow at residues 62–108 and 125–176; these read TLYI…PRGD and SLFL…ANIP. N-linked (GlcNAc...) asparagine glycans are attached at residues N251 and N291. Kelch repeat units follow at residues 283–331, 340–395, 396–445, and 463–509; these read ILGL…AVAA, QVYL…IWNS, QIVV…ASQT, and VQSV…GPHA. The helical transmembrane segment at 523–543 threads the bilayer; sequence AIVAGVIAGCLGVLAIYLGFV. At 544–668 the chain is on the cytoplasmic side; it reads TWLYRRRLAI…PRQTLRVINQ (125 aa). A disordered region spans residues 611 to 642; sequence DNQRHNHTRSSSGGNFDHLAQPERPSTSSSVE.

It is found in the membrane. It localises to the secreted. The sequence is that of Kelch repeat-containing protein ARB_01230 from Arthroderma benhamiae (strain ATCC MYA-4681 / CBS 112371) (Trichophyton mentagrophytes).